Reading from the N-terminus, the 452-residue chain is tRNA modification GTPase MnmE (452 aa).

Residues Arg-23, Glu-81, and Lys-120 each contribute to the (6S)-5-formyl-5,6,7,8-tetrahydrofolate site. One can recognise a TrmE-type G domain in the interval Gly-217–Leu-373. K(+) is bound at residue Asn-227. Residues Asn-227–Ser-232, Thr-246–Thr-252, and Asp-271–Gly-274 each bind GTP. Ser-231 is a binding site for Mg(2+). Residues Thr-246, Ile-248, and Thr-251 each contribute to the K(+) site. Thr-252 lines the Mg(2+) pocket. Lys-452 is a (6S)-5-formyl-5,6,7,8-tetrahydrofolate binding site.

This sequence belongs to the TRAFAC class TrmE-Era-EngA-EngB-Septin-like GTPase superfamily. TrmE GTPase family. As to quaternary structure, homodimer. Heterotetramer of two MnmE and two MnmG subunits. Requires K(+) as cofactor.

The protein localises to the cytoplasm. Functionally, exhibits a very high intrinsic GTPase hydrolysis rate. Involved in the addition of a carboxymethylaminomethyl (cmnm) group at the wobble position (U34) of certain tRNAs, forming tRNA-cmnm(5)s(2)U34. The sequence is that of tRNA modification GTPase MnmE from Mycoplasma mycoides subsp. mycoides SC (strain CCUG 32753 / NCTC 10114 / PG1).